The chain runs to 476 residues: Serine/threonine-protein kinase Chk1 (476 aa).

The interaction with CLSPN stretch occupies residues 1–265 (MAVPFVEDWD…IPDIKKDRWY (265 aa)). The 257-residue stretch at 9–265 (WDLVQTLGEG…IPDIKKDRWY (257 aa)) folds into the Protein kinase domain. Residues 15–23 (LGEGAYGEV) and lysine 38 contribute to the ATP site. Aspartate 130 functions as the Proton acceptor in the catalytic mechanism. Residue lysine 132 forms a Glycyl lysine isopeptide (Lys-Gly) (interchain with G-Cter in ubiquitin) linkage. The disordered stretch occupies residues 267–331 (KPLNRGAKRP…RTGLSLWDTG (65 aa)). A Phosphoserine; by PKB/AKT1 modification is found at serine 280. Residues 280 to 291 (SGGMSESSSGFS) show a composition bias toward low complexity. A phosphoserine mark is found at serine 286, serine 296, and serine 301. The segment covering 298–320 (LDFSPVNNGSSEETVKFSSSQPE) has biased composition (polar residues). Residue serine 317 is modified to Phosphoserine; by ATM and ATR. Phosphoserine; by ATR is present on serine 345. Positions 391-476 (QCLKETFEKL…SSQKVWFPVT (86 aa)) are autoinhibitory region. A Glycyl lysine isopeptide (Lys-Gly) (interchain with G-Cter in ubiquitin) cross-link involves residue lysine 436. Residues serine 463, serine 467, and serine 468 each carry the phosphoserine modification.

Belongs to the protein kinase superfamily. CAMK Ser/Thr protein kinase family. NIM1 subfamily. Interacts (phosphorylated by ATR) with RAD51. Interacts with and phosphorylates CLSPN, an adapter protein that regulates the ATR-dependent phosphorylation of CHEK1. Interacts with BRCA1. Interacts with and phosphorylates CDC25A, CDC25B and CDC25C. Interacts with FBXO6, which regulates CHEK1. Interacts with PPM1D, which regulates CHEK1 through dephosphorylation. Interacts with TIMELESS; DNA damage-dependent. Interacts with FEM1B; activates CHEK1 in response to stress. Interacts with TLK1. Interacts with XPO1 and YWHAZ. Interacts with CDK5RAP3; antagonizes CHEK1. Post-translationally, phosphorylated by ATR in a RAD17-dependent manner in response to ultraviolet irradiation and inhibition of DNA replication. Phosphorylated by ATM in response to ionizing irradiation. ATM and ATR can both phosphorylate Ser-317 and Ser-345 and this results in enhanced kinase activity. Phosphorylation at Ser-345 induces a change in the conformation of the protein, activates the kinase activity and is a prerequisite for interaction with FBXO6 and subsequent ubiquitination at Lys-436. Phosphorylation at Ser-345 also increases binding to 14-3-3 proteins and promotes nuclear retention. Conversely, dephosphorylation at Ser-345 by PPM1D may contribute to exit from checkpoint mediated cell cycle arrest. Phosphorylation at Ser-280 by AKT1/PKB, may promote mono and/or diubiquitination. Also phosphorylated at undefined residues during mitotic arrest, resulting in decreased activity. In terms of processing, ubiquitinated. Mono or diubiquitination promotes nuclear exclusion. The activated form (phosphorylated on Ser-345) is polyubiquitinated at Lys-436 by some SCF-type E3 ubiquitin ligase complex containing FBXO6 promoting its degradation. Ubiquitination and degradation are required to terminate the checkpoint and ensure that activated CHEK1 does not accumulate as cells progress through S phase, when replication forks encounter transient impediments during normal DNA replication. 'Lys-63'-mediated ubiquitination by TRAF4 at Lys-132 activates cell cycle arrest and activation of DNA repair. Proteolytically cleaved at the C-terminus by SPRTN during normal DNA replication, thereby promoting CHEK1 removal from chromatin and activating the protein kinase activity. In terms of tissue distribution, found in all adult tissues tested. Elevated expression in testis, lung and spleen. 15.5 day old embryos show ubiquitous expression with strong expression in brain, liver, kidney, pancreas, intestine, thymus and lung.

The protein resides in the nucleus. Its subcellular location is the chromosome. The protein localises to the cytoplasm. It is found in the cytoskeleton. It localises to the microtubule organizing center. The protein resides in the centrosome. It catalyses the reaction L-seryl-[protein] + ATP = O-phospho-L-seryl-[protein] + ADP + H(+). The enzyme catalyses L-threonyl-[protein] + ATP = O-phospho-L-threonyl-[protein] + ADP + H(+). With respect to regulation, activated through phosphorylation predominantly by ATR but also by ATM in response to DNA damage or inhibition of DNA replication. Activation is modulated by several mediators including CLSPN, BRCA1 and FEM1B. Proteolytic cleavage at the C-terminus by SPRTN during normal DNA replication activates the protein kinase activity. Serine/threonine-protein kinase which is required for checkpoint-mediated cell cycle arrest and activation of DNA repair in response to the presence of DNA damage or unreplicated DNA. May also negatively regulate cell cycle progression during unperturbed cell cycles. This regulation is achieved by a number of mechanisms that together help to preserve the integrity of the genome. Recognizes the substrate consensus sequence [R-X-X-S/T]. Binds to and phosphorylates CDC25A, CDC25B and CDC25C. Phosphorylation of CDC25A at 'Ser-178' and 'Thr-507' and phosphorylation of CDC25C at 'Ser-216' creates binding sites for 14-3-3 proteins which inhibit CDC25A and CDC25C. Phosphorylation of CDC25A at 'Ser-76', 'Ser-124', 'Ser-178', 'Ser-279' and 'Ser-293' promotes proteolysis of CDC25A. Phosphorylation of CDC25A at 'Ser-76' primes the protein for subsequent phosphorylation at 'Ser-79', 'Ser-82' and 'Ser-88' by NEK11, which is required for polyubiquitination and degradation of CDCD25A. Inhibition of CDC25 leads to increased inhibitory tyrosine phosphorylation of CDK-cyclin complexes and blocks cell cycle progression. Also phosphorylates NEK6. Binds to and phosphorylates RAD51 at 'Thr-309', which promotes the release of RAD51 from BRCA2 and enhances the association of RAD51 with chromatin, thereby promoting DNA repair by homologous recombination. Phosphorylates multiple sites within the C-terminus of TP53, which promotes activation of TP53 by acetylation and promotes cell cycle arrest and suppression of cellular proliferation. Also promotes repair of DNA cross-links through phosphorylation of FANCE. Binds to and phosphorylates TLK1 at 'Ser-743', which prevents the TLK1-dependent phosphorylation of the chromatin assembly factor ASF1A. This may enhance chromatin assembly both in the presence or absence of DNA damage. May also play a role in replication fork maintenance through regulation of PCNA. May regulate the transcription of genes that regulate cell-cycle progression through the phosphorylation of histones. Phosphorylates histone H3.1 (to form H3T11ph), which leads to epigenetic inhibition of a subset of genes. May also phosphorylate RB1 to promote its interaction with the E2F family of transcription factors and subsequent cell cycle arrest. Phosphorylates SPRTN, promoting SPRTN recruitment to chromatin. Reduces replication stress and activates the G2/M checkpoint, by phosphorylating and inactivating PABIR1/FAM122A and promoting the serine/threonine-protein phosphatase 2A-mediated dephosphorylation and stabilization of WEE1 levels and activity. This is Serine/threonine-protein kinase Chk1 (Chek1) from Mus musculus (Mouse).